Here is a 230-residue protein sequence, read N- to C-terminus: MAGKENNFPPLPHFLPLKPCFYQDFSDEIPVEHQVLVKRIYRLWMFYCTTLGVNLVACLAWWIAGGAGANFGLAMLWLVLFTPCSYVCWFRPAYKAFRADSSFNFMAFFFIFGAQFVLTVIQAIGFSGWGACGWLATIGFFGTSVGAAVVMLIPAIMFSLSAVVMAITIVKVHRIYRGAGGSLQKAQTEWSAGTWRNPPSREAQFNSFSGNSLPEYPTVPSYSTSGSQWP.

Residues M1–R39 lie on the Cytoplasmic side of the membrane. Helical transmembrane passes span I40–A60, W61–F81, M106–F126, and V149–I169. The Cytoplasmic portion of the chain corresponds to V170–P230. T194 carries the post-translational modification Phosphothreonine. Residues N197–P230 are disordered. Polar residues-rich tracts occupy residues A203–S212 and P220–P230.

It belongs to the SCAMP family.

The protein localises to the membrane. Probably involved in membrane protein trafficking. The chain is Secretory carrier-associated membrane protein 4 (Scamp4) from Rattus norvegicus (Rat).